The chain runs to 348 residues: Probable UDP-arabinopyranose mutase 5 (348 aa).

The DXD motif signature appears at 100–102; sequence DDD. Arginine 148 carries N-linked (Glc...) arginine glycosylation.

Belongs to the RGP family. As to quaternary structure, heteromers with RGP1 and RGP2. Requires Mn(2+) as cofactor. The cofactor is Mg(2+). In terms of processing, reversibly glycosylated in vitro by UDP-glucose, UDP-xylose and UDP-galactose, but not UDP-mannose. In terms of tissue distribution, widely expressed at low levels.

Its subcellular location is the cytoplasm. It localises to the cytosol. It is found in the golgi apparatus. It carries out the reaction UDP-beta-L-arabinofuranose = UDP-beta-L-arabinopyranose. Probable UDP-L-arabinose mutase involved in the biosynthesis of cell wall non-cellulosic polysaccharides. This chain is Probable UDP-arabinopyranose mutase 5, found in Arabidopsis thaliana (Mouse-ear cress).